Here is a 282-residue protein sequence, read N- to C-terminus: Pantothenate synthetase (282 aa).

An ATP-binding site is contributed by 29-36 (MGFLHEGH). The active-site Proton donor is histidine 36. Glutamine 60 is a (R)-pantoate binding site. Glutamine 60 contributes to the beta-alanine binding site. 146-149 (GEKD) is a binding site for ATP. Residue glutamine 152 coordinates (R)-pantoate. Residues isoleucine 175 and 183 to 186 (KSSR) contribute to the ATP site.

The protein belongs to the pantothenate synthetase family. In terms of assembly, homodimer.

Its subcellular location is the cytoplasm. The catalysed reaction is (R)-pantoate + beta-alanine + ATP = (R)-pantothenate + AMP + diphosphate + H(+). It participates in cofactor biosynthesis; (R)-pantothenate biosynthesis; (R)-pantothenate from (R)-pantoate and beta-alanine: step 1/1. Catalyzes the condensation of pantoate with beta-alanine in an ATP-dependent reaction via a pantoyl-adenylate intermediate. This is Pantothenate synthetase from Clostridioides difficile (strain 630) (Peptoclostridium difficile).